The primary structure comprises 2050 residues: Unconventional myosin-XVIIIa (2050 aa).

Basic and acidic residues-rich tracts occupy residues 1 to 17 (MFNL…GRKE) and 23 to 34 (EKKERMSAAELR). The segment at 1 to 34 (MFNLMKKDKDKDGGRKEKKEKKEKKERMSAAELR) is disordered. Residues 1-398 (MFNLMKKDKD…LDVDEDDIEK (398 aa)) form a mediates nucleotide-independent binding to F-actin and interaction with GOLPH3 region. A phosphoserine mark is found at serine 35, serine 52, serine 72, and serine 74. Threonine 79 is subject to Phosphothreonine. Residues serine 83 and serine 98 each carry the phosphoserine modification. Threonine 99 bears the Phosphothreonine mark. A phosphoserine mark is found at serine 102 and serine 103. The Interaction with actin signature appears at 114-118 (RGSVL). A phosphoserine mark is found at serine 140, serine 145, serine 157, serine 160, serine 164, serine 234, and isoleucine 340. A disordered region spans residues 140-167 (SFSQRSRDESASETSTPSEHSAAPSPQV). A PDZ domain is found at 220-311 (ELELQRRPTG…SVRLKVQPIP (92 aa)). One can recognise a Myosin N-terminal SH3-like domain in the interval 349 to 401 (TEKVWLVHRDGFSLASQLKSEELSLPEGKARVKLDHDGAILDVDEDDIEKANA). The Myosin motor domain occupies 405-1181 (DRLEDLASLV…TLARLEEQRD (777 aa)). ATP is bound at residue 498–505 (GSSGSGKT). A phosphoserine mark is found at serine 983, serine 1063, serine 1064, and serine 1066. The tract at residues 1051–1071 (PGEPRSASSRRVSSSSELDLP) is disordered. Residues 1055–1066 (RSASSRRVSSSS) show a composition bias toward low complexity. The 30-residue stretch at 1184–1213 (TSRHLTLFQAACRGYLARQHFKKRKIQDLA) folds into the IQ domain. A coiled-coil region spans residues 1242 to 1967 (LIQVQLSEEQ…KKNKLEGDSD (726 aa)). The segment at 1448–1477 (RNHELEKKQRRFDSELSQAHEETQREKLQR) is disordered. A Phosphoserine modification is found at serine 1636. The tract at residues 1848-1897 (MEKLTEERDQRAAAENREKEQNKRLQRQLRDTKEEMSELARKEAEASRKK) is disordered. Phosphoserine is present on residues serine 1938, serine 1966, serine 1970, serine 1994, serine 1998, serine 2002, serine 2003, serine 2016, serine 2032, serine 2037, and serine 2039. The tract at residues 1955–2050 (YQKKKNKLEG…TEAKLTETSA (96 aa)) is disordered. Position 2041 is a phosphothreonine (threonine 2041). A compositionally biased stretch (basic and acidic residues) spans 2041 to 2050 (TEAKLTETSA).

This sequence belongs to the TRAFAC class myosin-kinesin ATPase superfamily. Myosin family. As to quaternary structure, homodimer. Forms a tripartite complex with CDC42BPA/CDC42BPB and LURAP1 with the latter acting as an adapter connecting CDC42BPA/CDC42BPB and MYO18A. Binds F-actin; regulated by ADP and GOLPH3. Interacts with GOLPH3; the interaction is direct and may link Golgi membranes to the actin cytoskeleton. Interacts with JAK3. Interacts with MSR1 and CD14. Phosphorylated on tyrosine upon CSF1R activation. Isoform 6 is phosphorylated on Ser-340. Isoform 1; Expressed ubiquitously. Isoform 2: Specifically expressed in most hematopoietic cells. Isoform 3: Predominantly expressed in alveolar macrophages.

It localises to the golgi apparatus. The protein resides in the trans-Golgi network. The protein localises to the golgi outpost. Its subcellular location is the cytoplasm. It is found in the cytoskeleton. It localises to the microtubule organizing center. The protein resides in the endoplasmic reticulum-Golgi intermediate compartment. May link Golgi membranes to the cytoskeleton and participate in the tensile force required for vesicle budding from the Golgi. Thereby, may play a role in Golgi membrane trafficking and could indirectly give its flattened shape to the Golgi apparatus. Alternatively, in concert with LURAP1 and CDC42BPA/CDC42BPB, has been involved in modulating lamellar actomyosin retrograde flow that is crucial to cell protrusion and migration. May be involved in the maintenance of the stromal cell architectures required for cell to cell contact. Regulates trafficking, expression, and activation of innate immune receptors on macrophages. Plays a role to suppress inflammatory responsiveness of macrophages via a mechanism that modulates CD14 trafficking. Acts as a receptor of surfactant-associated protein A (SFTPA1/SP-A) and plays an important role in internalization and clearance of SFTPA1-opsonized S.aureus by alveolar macrophages. Strongly enhances natural killer cell cytotoxicity. The protein is Unconventional myosin-XVIIIa (Myo18a) of Mus musculus (Mouse).